A 441-amino-acid chain; its full sequence is Xaa-Pro aminopeptidase (441 aa).

Mn(2+) contacts are provided by aspartate 261, aspartate 272, histidine 355, glutamate 384, and glutamate 407.

Belongs to the peptidase M24B family. Homotetramer. Mn(2+) is required as a cofactor.

It is found in the cytoplasm. The enzyme catalyses Release of any N-terminal amino acid, including proline, that is linked to proline, even from a dipeptide or tripeptide.. The chain is Xaa-Pro aminopeptidase (pepP) from Escherichia coli (strain K12).